Reading from the N-terminus, the 229-residue chain is ATP synthase subunit a (229 aa).

Transmembrane regions (helical) follow at residues 25 to 45, 58 to 75, 81 to 101, 110 to 130, 141 to 161, 175 to 195, and 196 to 216; these read VHIIYTWVVMALLITLGVLGA, FLEVLISGIEEFMVSVTG, FFPLAGTIAIFIAVSNLIGLV, SINTPLACAIVVFVFTHFIGI, FLGPVWWLAPLIFPIEIIGHL, MMGHESVLVILFMLGGAFFAP, and LPIMALGIFVAFVQAFVFFLL.

The protein belongs to the ATPase A chain family. F-type ATPases have 2 components, CF(1) - the catalytic core - and CF(0) - the membrane proton channel. CF(1) has five subunits: alpha(3), beta(3), gamma(1), delta(1), epsilon(1). CF(0) has three main subunits: a(1), b(2) and c(9-12). The alpha and beta chains form an alternating ring which encloses part of the gamma chain. CF(1) is attached to CF(0) by a central stalk formed by the gamma and epsilon chains, while a peripheral stalk is formed by the delta and b chains.

The protein resides in the cell inner membrane. Functionally, key component of the proton channel; it plays a direct role in the translocation of protons across the membrane. This Desulfosudis oleivorans (strain DSM 6200 / JCM 39069 / Hxd3) (Desulfococcus oleovorans) protein is ATP synthase subunit a.